The chain runs to 224 residues: Germin-like protein 8-8 (224 aa).

A signal peptide spans 1 to 22 (MASPSFCLLAALLALVSWQAIA). Cys-32 and Cys-47 are disulfide-bonded. One can recognise a Cupin type-1 domain in the interval 62 to 212 (AMLDTPRKTN…AFQVEKGTID (151 aa)). Asn-76 carries an N-linked (GlcNAc...) asparagine glycan. 3 residues coordinate Mn(2+): His-109, His-111, and Glu-116. Residue Asn-135 is glycosylated (N-linked (GlcNAc...) asparagine). His-157 lines the Mn(2+) pocket.

The protein belongs to the germin family. As to quaternary structure, oligomer (believed to be a pentamer but probably hexamer).

It localises to the secreted. It is found in the extracellular space. Its subcellular location is the apoplast. Functionally, plays a role in broad-spectrum disease resistance. Probably has no oxalate oxidase activity even if the active site is conserved. The chain is Germin-like protein 8-8 from Oryza sativa subsp. japonica (Rice).